We begin with the raw amino-acid sequence, 84 residues long: Polcalcin Nic t 1 (84 aa).

2 EF-hand domains span residues 6–40 (QDIA…MLGS) and 41–76 (VTSE…NRGL). Positions 19, 21, 23, 25, 30, 54, 56, 58, and 65 each coordinate Ca(2+).

This chain is Polcalcin Nic t 1 (Nict1), found in Nicotiana tabacum (Common tobacco).